Here is a 718-residue protein sequence, read N- to C-terminus: Acetolactate synthase, mitochondrial (718 aa).

2 disordered regions span residues 1-50 (MLTR…APVY) and 72-101 (RKIQSSASTAAASPAVRPQPAQHFQAAPQP). Residues 32–45 (RYSNNIHTSSTQNA) are compositionally biased toward polar residues. The segment covering 76–99 (SSASTAAASPAVRPQPAQHFQAAP) has biased composition (low complexity). A thiamine diphosphate-binding site is contributed by glutamate 173. Arginine 275 contacts FAD. The tract at residues 296-327 (IPAKSAQPGHSPYLPSNPLNPSSQPSDPLPGD) is disordered. The segment covering 306-325 (SPYLPSNPLNPSSQPSDPLP) has biased composition (low complexity). FAD contacts are provided by residues 397–418 (HGSAYANFAMQEADVLIALGVR) and 449–468 (EIQPKNINKIVEAQIPVLGD). Residues 541–621 (QHQMWACQYY…VKVLLFNNEF (81 aa)) are thiamine pyrophosphate binding. Mg(2+) contacts are provided by aspartate 592 and asparagine 619.

Belongs to the TPP enzyme family. Mg(2+) serves as cofactor. Requires thiamine diphosphate as cofactor.

It localises to the mitochondrion. It carries out the reaction 2 pyruvate + H(+) = (2S)-2-acetolactate + CO2. It functions in the pathway amino-acid biosynthesis; L-isoleucine biosynthesis; L-isoleucine from 2-oxobutanoate: step 1/4. The protein operates within amino-acid biosynthesis; L-valine biosynthesis; L-valine from pyruvate: step 1/4. The polypeptide is Acetolactate synthase, mitochondrial (ILV2) (Cryptococcus neoformans var. neoformans serotype D (strain JEC21 / ATCC MYA-565) (Filobasidiella neoformans)).